The chain runs to 343 residues: Interferon-inducible protein AIM2 (343 aa).

The 87-residue stretch at 1 to 87 folds into the Pyrin domain; that stretch reads MESKYKEILL…AKRLQEEKEK (87 aa). Residues 138–337 form the HIN-200 domain; sequence MVAQQESIRE…SGVHSTIKVI (200 aa).

It belongs to the HIN-200 family. In terms of assembly, self-associates; forms homooligomers in response to cytosolic double-stranded DNA (dsDNA) and the dsDNA seems to serve as oligomerization platform. Component of AIM2 inflammasome, which consists of a signal sensor component (AIM2), an adapter (PYCARD/ASC), which recruits an effector pro-inflammatory caspase (CASP1). Interacts (via pyrin domain) with PYCARD/ASC (via pyrin domain); interaction is direct. Component of the AIM2 PANoptosome complex, a multiprotein complex that drives inflammatory cell death (PANoptosis). Interacts with PYDC5; disrupts assembly of the AIM2 inflammasome complex. Interacts with EIF2AK2/PKR. Interacts with MAPRE1. Interacts with IFI16. Interacts with isoform IFI16-beta of IFI16; preventing the interaction between AIM2 and PYCARD/ASC. Interacts with RACK1; promoting association with PP2A phosphatase and dephosphorylation of AKT1. Interacts with TRIM11; promoting AIM2 recruitment to autophagosomes and autophagy-dependent degradation. As to quaternary structure, (Microbial infection) Interacts with human herpesvirus 8 protein SOX/ORF37; this interaction inhibits AIM2 polymerization and subsequent inflammasome activation. In terms of processing, degraded via selective autophagy following interaction with TRIM11. Expressed in spleen, small intestine, peripheral blood leukocytes, and testis.

The protein localises to the cytoplasm. It is found in the inflammasome. It localises to the nucleus. With respect to regulation, inactive in absence of double-stranded DNA (dsDNA). Homooligomerizes upon binding to dsDNA, dsDNA serving as an oligomerization platform. AIM2 requires large dsDNA to generate a structural template that couples dsDNA ligand-binding and homooligomerization. Homooligomerization is followed by recruitment of PYCARD/ASC to initiate speck formation (nucleation). AIM2 and PYCARD/ASC homooligomer filaments assemble bidirectionally and the recognition between AIM2 and PYCARD/ASC oligomers occurs in a head-to-tail manner. Clustered PYCARD/ASC nucleates the formation of CASP1 filaments through the interaction of their respective CARD domains, acting as a platform for CASP1 polymerization and activation. Active CASP1 then specifically processes protein precursors, such as gasdermin-D (GSDMD), IL1B and IL18, leading to the release of mature cytokines in the extracellular milieu or pyroptosis, depending on cell type. AIM2 can be activated in response to events that cause genomic DNA (HIV protease inhibitor nelfinavir) or mitochondrial DNA release in the cytoplasm (such as Perfluoroalkyl substance pollutants or cholesterol overload). Activation of the AIM2 inflammasome is inhibited by isoform IFI16-beta of IFI16, which prevents the interaction between AIM2 and PYCARD/ASC. Activation of the AIM2 inflammasome is inhibited by TRIM11, which promotes autophagy-dependent degradation of AIM2. Sensor component of the AIM2 inflammasome, which mediates inflammasome activation in response to the presence of double-stranded DNA (dsDNA) in the cytosol, leading to subsequent pyroptosis. Inflammasomes are supramolecular complexes that assemble in the cytosol in response to pathogens and other damage-associated signals and play critical roles in innate immunity and inflammation. Acts as a recognition receptor (PRR): specifically recognizes and binds dsDNA in the cytosol, and mediates the formation of the inflammasome polymeric complex composed of AIM2, CASP1 and PYCARD/ASC. Recruitment of pro-caspase-1 (proCASP1) to the AIM2 inflammasome promotes caspase-1 (CASP1) activation, which subsequently cleaves and activates inflammatory cytokines IL1B and IL18 and gasdermin-D (GSDMD), promoting cytokine secretion. In some cells, CASP1 activation mediates cleavage and activation of GSDMD, triggering pyroptosis without promoting cytokine secretion. Detects cytosolic dsDNA of viral and bacterial origin in a non-sequence-specific manner. Involved in the DNA damage response caused by acute ionizing radiation by mediating pyroptosis of intestinal epithelial cells and bone marrow cells in response to double-strand DNA breaks. Mechanistically, AIM2 senses DNA damage in the nucleus to mediate inflammasome assembly and inflammatory cell death. Also acts as a regulator of neurodevelopment via its role in the DNA damage response: acts by promoting neural cell death in response to DNA damage in the developing brain, thereby purging genetically compromised cells of the central nervous system. Pyroptosis mediated by the AIM2 inflammasome in response to DNA damage is dependent on GSDMD without involving IL1B and IL18 cytokine secretion. Also acts as a mediator of pyroptosis, necroptosis and apoptosis (PANoptosis), an integral part of host defense against pathogens, in response to bacterial infection. Can also trigger PYCARD/ASC-dependent, caspase-1-independent cell death that involves caspase-8 (CASP8). Functionally, also acts as a tumor suppressor independently of its role in inflammatory response. Able to suppress overt cell proliferation in enterocytes: restricts stem cell proliferation in the intestinal mucosa in an inflammasome-independent manner, contributing to a decrease in the likelihood of colorectal cancer development. AIM2 suppresses cell proliferation by inhibiting phosphorylation of AKT1 at 'Ser-473', preventing AKT1 activation and AKT-mTOR signaling pathway. Inhibits AKT1 phosphorylation both by inhibiting the activity of PRKDC/DNA-PK kinase and promoting dephosphorylation by PP2A phosphatase. Also acts as a key regulator of regulatory T-cells (Treg) homeostasis by promoting their stability: acts by preventing AKT1 activation. Its role in Treg homeostasis is important to restain autoimmune diseases. This chain is Interferon-inducible protein AIM2, found in Homo sapiens (Human).